Here is a 356-residue protein sequence, read N- to C-terminus: Protein-glutamate methylesterase/protein-glutamine glutaminase 3 (356 aa).

Residues 3-120 form the Response regulatory domain; the sequence is KVAIVDDSAV…KGFLEESQAR (118 aa). Asp54 bears the 4-aspartylphosphate mark. Residues 165-356 form the CheB-type methylesterase domain; sequence NQTTDRVVAL…AEEIIAFTKQ (192 aa). Residues Ser177, His203, and Asp299 contribute to the active site.

This sequence belongs to the CheB family. In terms of processing, phosphorylated by CheA. Phosphorylation of the N-terminal regulatory domain activates the methylesterase activity.

The protein localises to the cytoplasm. It carries out the reaction [protein]-L-glutamate 5-O-methyl ester + H2O = L-glutamyl-[protein] + methanol + H(+). It catalyses the reaction L-glutaminyl-[protein] + H2O = L-glutamyl-[protein] + NH4(+). Involved in chemotaxis. Part of a chemotaxis signal transduction system that modulates chemotaxis in response to various stimuli. Catalyzes the demethylation of specific methylglutamate residues introduced into the chemoreceptors (methyl-accepting chemotaxis proteins or MCP) by CheR. Also mediates the irreversible deamidation of specific glutamine residues to glutamic acid. This Shewanella oneidensis (strain ATCC 700550 / JCM 31522 / CIP 106686 / LMG 19005 / NCIMB 14063 / MR-1) protein is Protein-glutamate methylesterase/protein-glutamine glutaminase 3.